Here is a 274-residue protein sequence, read N- to C-terminus: Large ribosomal subunit protein uL2 (274 aa).

The segment at 223-274 is disordered; sequence VAMNPVDHPHGGGEGRTSGGRHPVTPWGVPTKGYKTRSNKRTDKYIVRRRNK.

It belongs to the universal ribosomal protein uL2 family. In terms of assembly, part of the 50S ribosomal subunit. Forms a bridge to the 30S subunit in the 70S ribosome.

Its function is as follows. One of the primary rRNA binding proteins. Required for association of the 30S and 50S subunits to form the 70S ribosome, for tRNA binding and peptide bond formation. It has been suggested to have peptidyltransferase activity; this is somewhat controversial. Makes several contacts with the 16S rRNA in the 70S ribosome. The sequence is that of Large ribosomal subunit protein uL2 from Shewanella putrefaciens (strain CN-32 / ATCC BAA-453).